A 399-amino-acid chain; its full sequence is 26S proteasome regulatory subunit 10B homolog A (399 aa).

N-acetylthreonine is present on Thr2. 180-187 (GPPGTGKT) serves as a coordination point for ATP. Residue Lys203 forms a Glycyl lysine isopeptide (Lys-Gly) (interchain with G-Cter in ubiquitin) linkage.

This sequence belongs to the AAA ATPase family. As to quaternary structure, component of the 19S regulatory particle (RP/PA700) base subcomplex of the 26S proteasome. The 26S proteasome is composed of a core protease (CP), known as the 20S proteasome, capped at one or both ends by the 19S regulatory particle (RP/PA700). The RP/PA700 complex is composed of at least 17 different subunits in two subcomplexes, the base and the lid, which form the portions proximal and distal to the 20S proteolytic core, respectively.

The protein resides in the cytoplasm. It localises to the nucleus. Functionally, the 26S proteasome is involved in the ATP-dependent degradation of ubiquitinated proteins. The regulatory (or ATPase) complex confers ATP dependency and substrate specificity to the 26S complex. The sequence is that of 26S proteasome regulatory subunit 10B homolog A (RPT4A) from Arabidopsis thaliana (Mouse-ear cress).